We begin with the raw amino-acid sequence, 227 residues long: Cytochrome c oxidase subunit 2 (227 aa).

At 1-14 (MAYPLQMGLQDATS) the chain is on the mitochondrial intermembrane side. A helical membrane pass occupies residues 15–45 (PIMEELLHFHDHTLMIVFLISSLVLYIISLM). The Mitochondrial matrix segment spans residues 46 to 59 (LTTKLTHTSTMDAQ). The chain crosses the membrane as a helical span at residues 60–87 (EVETVWTILPAIILILIALPSLRILYMM). Over 88 to 227 (DEINNPSLTV…HFEKWSTSML (140 aa)) the chain is Mitochondrial intermembrane. Cu cation contacts are provided by histidine 161, cysteine 196, glutamate 198, cysteine 200, histidine 204, and methionine 207. Glutamate 198 provides a ligand contact to Mg(2+).

The protein belongs to the cytochrome c oxidase subunit 2 family. As to quaternary structure, component of the cytochrome c oxidase (complex IV, CIV), a multisubunit enzyme composed of 14 subunits. The complex is composed of a catalytic core of 3 subunits MT-CO1, MT-CO2 and MT-CO3, encoded in the mitochondrial DNA, and 11 supernumerary subunits COX4I, COX5A, COX5B, COX6A, COX6B, COX6C, COX7A, COX7B, COX7C, COX8 and NDUFA4, which are encoded in the nuclear genome. The complex exists as a monomer or a dimer and forms supercomplexes (SCs) in the inner mitochondrial membrane with NADH-ubiquinone oxidoreductase (complex I, CI) and ubiquinol-cytochrome c oxidoreductase (cytochrome b-c1 complex, complex III, CIII), resulting in different assemblies (supercomplex SCI(1)III(2)IV(1) and megacomplex MCI(2)III(2)IV(2)). Found in a complex with TMEM177, COA6, COX18, COX20, SCO1 and SCO2. Interacts with TMEM177 in a COX20-dependent manner. Interacts with COX20. Interacts with COX16. The cofactor is Cu cation.

The protein localises to the mitochondrion inner membrane. The enzyme catalyses 4 Fe(II)-[cytochrome c] + O2 + 8 H(+)(in) = 4 Fe(III)-[cytochrome c] + 2 H2O + 4 H(+)(out). Component of the cytochrome c oxidase, the last enzyme in the mitochondrial electron transport chain which drives oxidative phosphorylation. The respiratory chain contains 3 multisubunit complexes succinate dehydrogenase (complex II, CII), ubiquinol-cytochrome c oxidoreductase (cytochrome b-c1 complex, complex III, CIII) and cytochrome c oxidase (complex IV, CIV), that cooperate to transfer electrons derived from NADH and succinate to molecular oxygen, creating an electrochemical gradient over the inner membrane that drives transmembrane transport and the ATP synthase. Cytochrome c oxidase is the component of the respiratory chain that catalyzes the reduction of oxygen to water. Electrons originating from reduced cytochrome c in the intermembrane space (IMS) are transferred via the dinuclear copper A center (CU(A)) of subunit 2 and heme A of subunit 1 to the active site in subunit 1, a binuclear center (BNC) formed by heme A3 and copper B (CU(B)). The BNC reduces molecular oxygen to 2 water molecules using 4 electrons from cytochrome c in the IMS and 4 protons from the mitochondrial matrix. This Halichoerus grypus (Gray seal) protein is Cytochrome c oxidase subunit 2 (MT-CO2).